The chain runs to 329 residues: Delta-aminolevulinic acid dehydratase (329 aa).

3 residues coordinate Zn(2+): cysteine 122, cysteine 124, and cysteine 132. Lysine 199 acts as the Schiff-base intermediate with substrate in catalysis. 5-aminolevulinate-binding residues include arginine 209 and arginine 221. The active-site Schiff-base intermediate with substrate is the lysine 252. Residues serine 279 and tyrosine 318 each coordinate 5-aminolevulinate.

This sequence belongs to the ALAD family. As to quaternary structure, homooctamer. Zn(2+) serves as cofactor.

The catalysed reaction is 2 5-aminolevulinate = porphobilinogen + 2 H2O + H(+). The protein operates within porphyrin-containing compound metabolism; protoporphyrin-IX biosynthesis; coproporphyrinogen-III from 5-aminolevulinate: step 1/4. Functionally, catalyzes an early step in the biosynthesis of tetrapyrroles. Binds two molecules of 5-aminolevulinate per subunit, each at a distinct site, and catalyzes their condensation to form porphobilinogen. The sequence is that of Delta-aminolevulinic acid dehydratase (hem2) from Schizosaccharomyces pombe (strain 972 / ATCC 24843) (Fission yeast).